The following is a 111-amino-acid chain: Nucleoid-associated protein SynRCC307_0025 (111 aa).

This sequence belongs to the YbaB/EbfC family. Homodimer.

Its subcellular location is the cytoplasm. The protein localises to the nucleoid. Its function is as follows. Binds to DNA and alters its conformation. May be involved in regulation of gene expression, nucleoid organization and DNA protection. The sequence is that of Nucleoid-associated protein SynRCC307_0025 from Synechococcus sp. (strain RCC307).